Here is a 127-residue protein sequence, read N- to C-terminus: Prefoldin subunit 6 (127 aa).

Alanine 2 carries the N-acetylalanine modification. Lysine 21 bears the N6-acetyllysine mark. Lysine 66 bears the N6-acetyllysine; alternate mark. Residue lysine 66 forms a Glycyl lysine isopeptide (Lys-Gly) (interchain with G-Cter in SUMO1); alternate linkage. Lysine 66 participates in a covalent cross-link: Glycyl lysine isopeptide (Lys-Gly) (interchain with G-Cter in SUMO2); alternate.

This sequence belongs to the prefoldin subunit beta family. In terms of assembly, heterohexamer of two PFD-alpha type and four PFD-beta type subunits. Component of the PAQosome complex which is responsible for the biogenesis of several protein complexes and which consists of R2TP complex members RUVBL1, RUVBL2, RPAP3 and PIH1D1, URI complex members PFDN2, PFDN6, PDRG1, UXT and URI1 as well as ASDURF, POLR2E and DNAAF10/WDR92.

Functionally, binds specifically to cytosolic chaperonin (c-CPN) and transfers target proteins to it. Binds to nascent polypeptide chain and promotes folding in an environment in which there are many competing pathways for nonnative proteins. The polypeptide is Prefoldin subunit 6 (Pfdn6) (Mus musculus (Mouse)).